A 339-amino-acid polypeptide reads, in one-letter code: UDP-glucose 4-epimerase (339 aa).

Residues G10–I12, D31–N35, D58–L59, F80, and K84 contribute to the NAD(+) site. S124–T126 is a binding site for substrate. Y148 functions as the Proton acceptor in the catalytic mechanism. Positions 152 and 176 each coordinate NAD(+). Substrate is bound by residues Y176–N178, N197–L199, R230, and R291–D294.

It belongs to the NAD(P)-dependent epimerase/dehydratase family. NAD(+) serves as cofactor.

It catalyses the reaction UDP-alpha-D-glucose = UDP-alpha-D-galactose. The enzyme catalyses UDP-N-acetyl-alpha-D-glucosamine = UDP-N-acetyl-alpha-D-galactosamine. It participates in cell wall biogenesis; teichoic acid biosynthesis. In terms of biological role, catalyzes two distinct but analogous reactions: the reversible epimerization of UDP-glucose to UDP-galactose and the reversible epimerization of UDP-N-acetylglucosamine to UDP-N-acetylgalactosamine. The enzyme is more efficient in catalyzing the interconversion between unacetylated than between corresponding N-acetylated substrates. Essential for growth in media containing either glucose or galactose. May protect the cell from the toxic effects of galactose and glucose or derivatives of both sugars. Involved in the biosynthesis of teichoic acids via the formation of UDP-N-acetylgalactosamine. Influences cell division. In Bacillus subtilis (strain 168), this protein is UDP-glucose 4-epimerase.